We begin with the raw amino-acid sequence, 659 residues long: ATP-binding cassette sub-family D member 3 (659 aa).

Residues 1–61 (MAAFSKYLTA…GKKERAVVDK (61 aa)) form an interaction with PEX19 region. Asn-12 carries N-linked (GlcNAc...) asparagine glycosylation. Lys-61 is modified (N6-acetyllysine). Residues 84–104 (GYLLLIAVMLVSRTYCDVWMI) form a helical membrane-spanning segment. The ABC transmembrane type-1 domain maps to 85–372 (YLLLIAVMLV…MLLRMSQALG (288 aa)). Residue Asn-106 is glycosylated (N-linked (GlcNAc...) asparagine). The chain crosses the membrane as a helical span at residues 126–146 (LFNFIAAMPLISLVNNFLKYG). N-linked (GlcNAc...) asparagine glycosylation occurs at Asn-206. Residues 224–244 (AIGAQGPASMMAYLLVSGLFL) form a helical membrane-spanning segment. Position 260 is an N6-acetyllysine (Lys-260). Residues 313 to 333 (MGFIDSIIAKYVATVVGYLVV) traverse the membrane as a helical segment. Lys-399 carries the post-translational modification N6-acetyllysine. Ser-424 is subject to Phosphoserine. The 226-residue stretch at 434–659 (INTDNIIKFD…ITEDTVEFGS (226 aa)) folds into the ABC transporter domain. 473–480 (GPNGCGKS) provides a ligand contact to ATP. Lys-533 is modified (N6-acetyllysine). Ser-659 is modified (phosphoserine).

The protein belongs to the ABC transporter superfamily. ABCD family. Peroxisomal fatty acyl CoA transporter (TC 3.A.1.203) subfamily. As to quaternary structure, homodimers. Can form heterodimers with ABCD1 and ABCD2. Dimerization is necessary to form an active transporter. Interacts with PEX19; mediates the targeting of ABCD3 to peroxisomes. Ubiquitinated by PEX2 during pexophagy in response to starvation, leading to its degradation.

The protein resides in the peroxisome membrane. The catalysed reaction is a very long-chain fatty acyl-CoA + H2O = a very long-chain fatty acid + CoA + H(+). It carries out the reaction a very long-chain fatty acid(in) + ATP + H2O = a very long-chain fatty acid(out) + ADP + phosphate + H(+). It catalyses the reaction a long-chain fatty acyl-CoA + H2O = a long-chain fatty acid + CoA + H(+). The enzyme catalyses a long-chain fatty acid(in) + ATP + H2O = a long-chain fatty acid(out) + ADP + phosphate + H(+). The catalysed reaction is pristanoyl-CoA + H2O = 2,6,10,14-tetramethylpentadecanoate + CoA + H(+). It carries out the reaction 2,6,10,14-tetramethylpentadecanoate(in) + ATP + H2O = 2,6,10,14-tetramethylpentadecanoate(out) + ADP + phosphate + H(+). It catalyses the reaction hexadecanedioyl-CoA + H2O = hexadecanedioate + CoA + H(+). The enzyme catalyses hexadecanedioate(in) + ATP + H2O = hexadecanedioate(out) + ADP + phosphate + H(+). The catalysed reaction is (5Z,8Z,11Z,14Z,17Z)-eicosapentaenoyl-CoA + H2O = (5Z,8Z,11Z,14Z,17Z)-eicosapentaenoate + CoA + H(+). It carries out the reaction (5Z,8Z,11Z,14Z,17Z)-eicosapentaenoate(in) + ATP + H2O = (5Z,8Z,11Z,14Z,17Z)-eicosapentaenoate(out) + ADP + phosphate + H(+). It catalyses the reaction (4Z,7Z,10Z,13Z,16Z,19Z)-docosahexaenoyl-CoA + H2O = (4Z,7Z,10Z,13Z,16Z,19Z)-docosahexaenoate + CoA + H(+). The enzyme catalyses (4Z,7Z,10Z,13Z,16Z,19Z)-docosahexaenoate(in) + ATP + H2O = (4Z,7Z,10Z,13Z,16Z,19Z)-docosahexaenoate(out) + ADP + phosphate + H(+). In terms of biological role, broad substrate specificity ATP-dependent transporter of the ATP-binding cassette (ABC) family that catalyzes the transport of long-chain fatty acids (LCFA)-CoA, dicarboxylic acids-CoA, long-branched-chain fatty acids-CoA and bile acids from the cytosol to the peroxisome lumen for beta-oxydation. Has fatty acyl-CoA thioesterase and ATPase activities. Probably hydrolyzes fatty acyl-CoAs into free fatty acids prior to their ATP-dependent transport into peroxisomes. Thus, play a role in regulation of LCFAs and energy metabolism namely, in the degradation and biosynthesis of fatty acids by beta-oxidation. The chain is ATP-binding cassette sub-family D member 3 (Abcd3) from Mus musculus (Mouse).